A 748-amino-acid chain; its full sequence is Peroxisomal membrane protein PEX14 (748 aa).

2 disordered regions span residues 1–138 (MDND…LSPS) and 190–228 (GNIN…NNNN). Topologically, residues 1–277 (MDNDDINNNN…IAQLMMNNNR (277 aa)) are peroxisomal. Residues 7-30 (NNNNNNNNNNNNNNNSQELDQQEQ) are compositionally biased toward low complexity. The stretch at 8-60 (NNNNNNNNNNNNNNSQELDQQEQTQEEITKQRIQKRKEEAKRIMEERKKREQQ) forms a coiled coil. Positions 43-59 (RKEEAKRIMEERKKREQ) are enriched in basic and acidic residues. A compositionally biased stretch (polar residues) spans 86 to 104 (PQRQQQYDDNDEPPQQQQY). 3 stretches are compositionally biased toward low complexity: residues 122–131 (TTSSTASAAT), 190–209 (GNIN…NSIS), and 218–228 (NNNNNSSNNNN). Residues 241–277 (QQHQQQQQMALTQIQSYQKRLEADDQRIAQLMMNNNR) are a coiled coil. Residues 278 to 300 (FSWNSFLFSVTAIVGAASGLAYL) traverse the membrane as a helical segment. The Cytoplasmic portion of the chain corresponds to 301-748 (TSNYIIPFLN…INNTDSSVEK (448 aa)). A coiled-coil region spans residues 316–413 (KDASANMDKK…IGNKENSNNS (98 aa)). 2 disordered regions span residues 406–673 (NKEN…ETPY) and 685–748 (KQGK…SVEK). 2 stretches are compositionally biased toward low complexity: residues 409 to 424 (NSNN…NNNN) and 445 to 476 (STNN…PGSN). Positions 510 to 527 (SWQQKSSNPPSDLSNAND) are enriched in polar residues. Low complexity-rich tracts occupy residues 528-542 (KSSP…PTKP) and 569-611 (TTTT…NNNN). Over residues 612 to 627 (TTIASTSNESNNSKVE) the composition is skewed to polar residues. A compositionally biased stretch (low complexity) spans 628–661 (TTSNDSDKSTSPSSSSNNTTSTTATTTTITSAST). The span at 710–723 (SAKERPKKPWERDT) shows a compositional bias: basic and acidic residues. Positions 724–748 (LTSVTNNLSVEETQTINNTDSSVEK) are enriched in polar residues.

The protein belongs to the peroxin-14 family. In terms of assembly, interacts with PEX13; forming the PEX13-PEX14 docking complex. Interacts with PEX5 (via WxxxF/Y motifs).

Its subcellular location is the peroxisome membrane. In terms of biological role, component of the PEX13-PEX14 docking complex, a translocon channel that specifically mediates the import of peroxisomal cargo proteins bound to PEX5 receptor. The PEX13-PEX14 docking complex forms a large import pore which can be opened to a diameter of about 9 nm. Mechanistically, PEX5 receptor along with cargo proteins associates with the PEX14 subunit of the PEX13-PEX14 docking complex in the cytosol, leading to the insertion of the receptor into the organelle membrane with the concomitant translocation of the cargo into the peroxisome matrix. This chain is Peroxisomal membrane protein PEX14 (pex14), found in Dictyostelium discoideum (Social amoeba).